A 143-amino-acid chain; its full sequence is Large ribosomal subunit protein uL13 (143 aa).

It belongs to the universal ribosomal protein uL13 family. In terms of assembly, part of the 50S ribosomal subunit.

Functionally, this protein is one of the early assembly proteins of the 50S ribosomal subunit, although it is not seen to bind rRNA by itself. It is important during the early stages of 50S assembly. This chain is Large ribosomal subunit protein uL13, found in Desulfitobacterium hafniense (strain DSM 10664 / DCB-2).